The primary structure comprises 377 residues: Histidinol-phosphate aminotransferase (377 aa).

Lys232 is subject to N6-(pyridoxal phosphate)lysine.

It belongs to the class-II pyridoxal-phosphate-dependent aminotransferase family. Histidinol-phosphate aminotransferase subfamily. Homodimer. Pyridoxal 5'-phosphate serves as cofactor.

The catalysed reaction is L-histidinol phosphate + 2-oxoglutarate = 3-(imidazol-4-yl)-2-oxopropyl phosphate + L-glutamate. The protein operates within amino-acid biosynthesis; L-histidine biosynthesis; L-histidine from 5-phospho-alpha-D-ribose 1-diphosphate: step 7/9. The chain is Histidinol-phosphate aminotransferase from Mycobacterium sp. (strain JLS).